Here is a 1207-residue protein sequence, read N- to C-terminus: DNA-directed RNA polymerase subunit beta' (1207 aa).

The Zn(2+) site is built by C60, C62, C75, and C78. The Mg(2+) site is built by D449, D451, and D453. The Zn(2+) site is built by C822, C896, C903, and C906.

The protein belongs to the RNA polymerase beta' chain family. In terms of assembly, the RNAP catalytic core consists of 2 alpha, 1 beta, 1 beta' and 1 omega subunit. When a sigma factor is associated with the core the holoenzyme is formed, which can initiate transcription. Mg(2+) is required as a cofactor. It depends on Zn(2+) as a cofactor.

It carries out the reaction RNA(n) + a ribonucleoside 5'-triphosphate = RNA(n+1) + diphosphate. DNA-dependent RNA polymerase catalyzes the transcription of DNA into RNA using the four ribonucleoside triphosphates as substrates. This chain is DNA-directed RNA polymerase subunit beta', found in Staphylococcus aureus (strain USA300).